The sequence spans 291 residues: 33 kDa chaperonin (291 aa).

Intrachain disulfides connect Cys235–Cys237 and Cys268–Cys271.

It belongs to the HSP33 family. Post-translationally, under oxidizing conditions two disulfide bonds are formed involving the reactive cysteines. Under reducing conditions zinc is bound to the reactive cysteines and the protein is inactive.

The protein localises to the cytoplasm. Its function is as follows. Redox regulated molecular chaperone. Protects both thermally unfolding and oxidatively damaged proteins from irreversible aggregation. Plays an important role in the bacterial defense system toward oxidative stress. The chain is 33 kDa chaperonin from Bacillus pumilus (strain SAFR-032).